A 476-amino-acid polypeptide reads, in one-letter code: 3-ketoacyl-CoA synthase 12 (476 aa).

The signal sequence occupies residues 1 to 25 (MDLLFLFFSLLLSYLFFKIWKLIDS). The region spanning 26-313 (KQDKDCYILD…FMLKLLIKKI (288 aa)) is the FAE domain. Residues Cys168, His247, His344, His348, His377, and Asn381 contribute to the active site.

This sequence belongs to the thiolase-like superfamily. Chalcone/stilbene synthases family. As to expression, expressed in siliques, flowers and leaves.

It is found in the endoplasmic reticulum. It carries out the reaction a very-long-chain acyl-CoA + malonyl-CoA + H(+) = a very-long-chain 3-oxoacyl-CoA + CO2 + CoA. The protein operates within lipid metabolism; fatty acid biosynthesis. In Arabidopsis thaliana (Mouse-ear cress), this protein is 3-ketoacyl-CoA synthase 12.